A 194-amino-acid polypeptide reads, in one-letter code: NADH-quinone oxidoreductase subunit B 1 (194 aa).

Polar residues predominate over residues 1 to 12 (MGVTPVSNQPLV). Residues 1–23 (MGVTPVSNQPLVAQQPKGIIDPS) are disordered. The [4Fe-4S] cluster site is built by cysteine 73, cysteine 74, cysteine 138, and cysteine 168.

The protein belongs to the complex I 20 kDa subunit family. In terms of assembly, NDH-1 is composed of 14 different subunits. Subunits NuoB, C, D, E, F, and G constitute the peripheral sector of the complex. The cofactor is [4Fe-4S] cluster.

Its subcellular location is the cell inner membrane. The enzyme catalyses a quinone + NADH + 5 H(+)(in) = a quinol + NAD(+) + 4 H(+)(out). NDH-1 shuttles electrons from NADH, via FMN and iron-sulfur (Fe-S) centers, to quinones in the respiratory chain. The immediate electron acceptor for the enzyme in this species is believed to be ubiquinone. Couples the redox reaction to proton translocation (for every two electrons transferred, four hydrogen ions are translocated across the cytoplasmic membrane), and thus conserves the redox energy in a proton gradient. This chain is NADH-quinone oxidoreductase subunit B 1, found in Rhizobium etli (strain ATCC 51251 / DSM 11541 / JCM 21823 / NBRC 15573 / CFN 42).